A 264-amino-acid polypeptide reads, in one-letter code: MKIGFYNIQGGTGKTTVAANFAYILSQSVKTILIDCDIYGGTTAVLFGLEDKEHNLNTYLAGDSAIEDIIYHYDDLAIIHTDVSSKVFGYKSDLNRFETLVKELEEEYDVIIYDFPPNITEDNPLIGYVGEFELVNKVVVVGEDSIPSIVNSLKTIELITDLGIGLTGIIVNKYRGLTDISEIIDDVIGVLPYDQNVERQWVESTPIVKIKTKFTKEMTALANEIASIYLEKDLASLRALRLAKAISELTEVEKSEKDFEDYLE.

Position 8 to 15 (8 to 15 (IQGGTGKT)) interacts with ATP.

This is an uncharacterized protein from Methanocaldococcus jannaschii (strain ATCC 43067 / DSM 2661 / JAL-1 / JCM 10045 / NBRC 100440) (Methanococcus jannaschii).